Here is a 188-residue protein sequence, read N- to C-terminus: Elongation factor P (188 aa).

Belongs to the elongation factor P family.

Its subcellular location is the cytoplasm. It functions in the pathway protein biosynthesis; polypeptide chain elongation. In terms of biological role, involved in peptide bond synthesis. Stimulates efficient translation and peptide-bond synthesis on native or reconstituted 70S ribosomes in vitro. Probably functions indirectly by altering the affinity of the ribosome for aminoacyl-tRNA, thus increasing their reactivity as acceptors for peptidyl transferase. This is Elongation factor P from Pelodictyon phaeoclathratiforme (strain DSM 5477 / BU-1).